The following is a 65-amino-acid chain: Large ribosomal subunit protein bL35 (65 aa).

The protein belongs to the bacterial ribosomal protein bL35 family.

The chain is Large ribosomal subunit protein bL35 from Clostridium acetobutylicum (strain ATCC 824 / DSM 792 / JCM 1419 / IAM 19013 / LMG 5710 / NBRC 13948 / NRRL B-527 / VKM B-1787 / 2291 / W).